Here is a 156-residue protein sequence, read N- to C-terminus: Transcription elongation factor GreA (156 aa).

Positions 12 to 72 form a coiled coil; the sequence is YKKLEDELST…KEIEHELKYA (61 aa).

Belongs to the GreA/GreB family.

In terms of biological role, necessary for efficient RNA polymerase transcription elongation past template-encoded arresting sites. The arresting sites in DNA have the property of trapping a certain fraction of elongating RNA polymerases that pass through, resulting in locked ternary complexes. Cleavage of the nascent transcript by cleavage factors such as GreA or GreB allows the resumption of elongation from the new 3'terminus. GreA releases sequences of 2 to 3 nucleotides. This chain is Transcription elongation factor GreA, found in Dehalococcoides mccartyi (strain ATCC BAA-2266 / KCTC 15142 / 195) (Dehalococcoides ethenogenes (strain 195)).